The primary structure comprises 1774 residues: Protein TIC 214 (1774 aa).

The next 6 membrane-spanning stretches (helical) occupy residues 19-39, 68-88, 91-111, 133-153, 176-196, and 227-247; these read IINS…FSIG, FIAG…HLAL, PHTI…WNNH, VFLN…SSML, VGWL…LVWI, and IFSI…PSPI. Residues 254 to 268 are compositionally biased toward basic and acidic residues; the sequence is GTSETEERGGTKQDQ. Positions 254-275 are disordered; it reads GTSETEERGGTKQDQEVSTEEA.

This sequence belongs to the TIC214 family. As to quaternary structure, part of the Tic complex.

It localises to the plastid. The protein localises to the chloroplast inner membrane. Functionally, involved in protein precursor import into chloroplasts. May be part of an intermediate translocation complex acting as a protein-conducting channel at the inner envelope. The polypeptide is Protein TIC 214 (Aethionema cordifolium (Lebanon stonecress)).